A 402-amino-acid chain; its full sequence is Metacaspase-1 (402 aa).

A disordered region spans residues 1–79; that stretch reads MAYPGQGGHH…FAPPSGPIGP (79 aa). The span at 23-45 shows a compositional bias: low complexity; that stretch reads PAPHGYAQPGYGYAPPSGPPQGY. Residues His-193 and Cys-249 contribute to the active site.

It belongs to the peptidase C14B family.

Involved in cell death (apoptosis). This is Metacaspase-1 (MCA1) from Mycosarcoma maydis (Corn smut fungus).